The primary structure comprises 264 residues: MFVPCGESAPDLAGFTLLMPAVSVGNVGQLAMDLIISTLNMSKIGYFYTDCLVPMVGNNPYATTEGNSTELSINAEVYSLPSRKLVALQLRSIFIKYKSKPFCEKLLSWVKSSGCARVIVLSSSHSYQRNDLQLRSTPFRYLLTPSMQKSVQNKIKSLNWEEMEKSRCIPEIDDSEFCIRIPGGGITKTLYDESCSKEIQMAVLLKFVSEGDNIPDALGLVEYLNEWLQILKPLSDDPTVSASRWKIPSSWRLLFGSGLPPALF.

Thr-137 is modified (phosphothreonine).

The protein belongs to the PSMG2 family. As to quaternary structure, forms a heterodimer with PSMG1. The PSMG1-PSMG2 heterodimer interacts directly with the PSMA5 and PSMA7 proteasome alpha subunits. In terms of processing, degraded by the proteasome upon completion of 20S proteasome maturation. Widely expressed with highest levels in lung, brain and colon. Moderately expressed in muscle, stomach, spleen and heart. Weakly expressed in small intestine, pancreas and liver. Highly expressed in hepatocellular carcinomas with low levels in surrounding liver tissue.

Its subcellular location is the nucleus. Its function is as follows. Chaperone protein which promotes assembly of the 20S proteasome as part of a heterodimer with PSMG1. The PSMG1-PSMG2 heterodimer binds to the PSMA5 and PSMA7 proteasome subunits, promotes assembly of the proteasome alpha subunits into the heteroheptameric alpha ring and prevents alpha ring dimerization. This Homo sapiens (Human) protein is Proteasome assembly chaperone 2.